A 318-amino-acid polypeptide reads, in one-letter code: Thymidylate synthase (318 aa).

DUMP-binding positions include arginine 25 and arginine 180 to arginine 181. The active-site Nucleophile is the cysteine 200. Residues arginine 220 to aspartate 223, asparagine 231, and histidine 261 to tyrosine 263 each bind dUMP. Aspartate 223 contacts (6R)-5,10-methylene-5,6,7,8-tetrahydrofolate. Alanine 317 provides a ligand contact to (6R)-5,10-methylene-5,6,7,8-tetrahydrofolate.

It belongs to the thymidylate synthase family. Bacterial-type ThyA subfamily. Homodimer.

The protein localises to the cytoplasm. The enzyme catalyses dUMP + (6R)-5,10-methylene-5,6,7,8-tetrahydrofolate = 7,8-dihydrofolate + dTMP. It functions in the pathway pyrimidine metabolism; dTTP biosynthesis. Its function is as follows. Catalyzes the reductive methylation of 2'-deoxyuridine-5'-monophosphate (dUMP) to 2'-deoxythymidine-5'-monophosphate (dTMP) while utilizing 5,10-methylenetetrahydrofolate (mTHF) as the methyl donor and reductant in the reaction, yielding dihydrofolate (DHF) as a by-product. This enzymatic reaction provides an intracellular de novo source of dTMP, an essential precursor for DNA biosynthesis. The protein is Thymidylate synthase of Bacillus cereus (strain ATCC 14579 / DSM 31 / CCUG 7414 / JCM 2152 / NBRC 15305 / NCIMB 9373 / NCTC 2599 / NRRL B-3711).